Here is a 455-residue protein sequence, read N- to C-terminus: MAWSPRHSAGRRLQLPLLCLLLQGATAILFAVFVRYNRETDAALWHWGNHSNADNEFYFRYPSFQDVHAMIFVGFGFLMVFLQRYGFGSVGFTFLLAAFALQWSTLIQGFFHSFRGGYILVGMESMINADFCAGAVLISFGAVLGKTGPVQLLLMALLEVVLFGLNEFVLLSLLEVKDAGGSMTIHTFGAYFGLILSRVLYRPQLEKSKHRQGSVYHSDLFAMIGTIFLWIFWPSFNSAPTALGDGQHRTALNTYYSLTASTLSTFALSALVGGDGRLDMVHVQNAALAGGVVVGTSAEMMLTPFGALAAGFLAGAISTLGYKFVTPILESKLKVQDTCGVHNLHGMPGVLGALLGGLVAGLATREAYGDGLESVFPLIAEGQRSATSQAMHQLFGLFVTLTFASVGGGLGGLLLRLPILDSPPDSQCYEDQIYWEVPGEHEHLAQGSEETETQA.

The Cytoplasmic portion of the chain corresponds to 1–13 (MAWSPRHSAGRRL). A helical membrane pass occupies residues 14–34 (QLPLLCLLLQGATAILFAVFV). At 35 to 61 (RYNRETDAALWHWGNHSNADNEFYFRY) the chain is on the extracellular side. N-linked (GlcNAc...) asparagine glycosylation occurs at N49. The helical transmembrane segment at 62-82 (PSFQDVHAMIFVGFGFLMVFL) threads the bilayer. Over 83–86 (QRYG) the chain is Cytoplasmic. Residues 87 to 107 (FGSVGFTFLLAAFALQWSTLI) traverse the membrane as a helical segment. Topologically, residues 108-124 (QGFFHSFRGGYILVGME) are extracellular. A helical transmembrane segment spans residues 125 to 145 (SMINADFCAGAVLISFGAVLG). The Cytoplasmic segment spans residues 146 to 151 (KTGPVQ). A helical membrane pass occupies residues 152–172 (LLLMALLEVVLFGLNEFVLLS). The Extracellular portion of the chain corresponds to 173–179 (LLEVKDA). A helical transmembrane segment spans residues 180–200 (GGSMTIHTFGAYFGLILSRVL). The Cytoplasmic portion of the chain corresponds to 201-219 (YRPQLEKSKHRQGSVYHSD). The helical transmembrane segment at 220–240 (LFAMIGTIFLWIFWPSFNSAP) threads the bilayer. Over 241–253 (TALGDGQHRTALN) the chain is Extracellular. Residues 254-274 (TYYSLTASTLSTFALSALVGG) traverse the membrane as a helical segment. Residues 275 to 277 (DGR) are Cytoplasmic-facing. The chain crosses the membrane as a helical span at residues 278–298 (LDMVHVQNAALAGGVVVGTSA). A topological domain (extracellular) is located at residue E299. Residues 300–320 (MMLTPFGALAAGFLAGAISTL) traverse the membrane as a helical segment. Topologically, residues 321–343 (GYKFVTPILESKLKVQDTCGVHN) are cytoplasmic. A helical membrane pass occupies residues 344–364 (LHGMPGVLGALLGGLVAGLAT). At 365–393 (REAYGDGLESVFPLIAEGQRSATSQAMHQ) the chain is on the extracellular side. A helical membrane pass occupies residues 394 to 414 (LFGLFVTLTFASVGGGLGGLL). Over 415 to 455 (LRLPILDSPPDSQCYEDQIYWEVPGEHEHLAQGSEETETQA) the chain is Cytoplasmic. An interaction with ANK3 region spans residues 416–424 (RLPILDSPP). A Basolateral sorting signal motif is present at residues 429–432 (YEDQ).

This sequence belongs to the ammonium transporter (TC 2.A.49) family. Rh subfamily. As to quaternary structure, interacts (via C-terminus) with ANK2 and ANK3; required for targeting to the basolateral membrane. N-glycosylated.

The protein localises to the cell membrane. Its subcellular location is the basolateral cell membrane. It carries out the reaction NH4(+)(in) = NH4(+)(out). The catalysed reaction is methylamine(out) = methylamine(in). It catalyses the reaction CO2(out) = CO2(in). Functionally, ammonium transporter involved in the maintenance of acid-base homeostasis. Transports ammonium and its related derivative methylammonium across the basolateral plasma membrane of epithelial cells likely contributing to renal transepithelial ammonia transport and ammonia metabolism. May transport either NH4(+) or NH3 ammonia species predominantly mediating an electrogenic NH4(+) transport. May act as a CO2 channel providing for renal acid secretion. The polypeptide is Ammonium transporter Rh type B (RHBG) (Bos taurus (Bovine)).